Consider the following 115-residue polypeptide: 5-hydroxyisourate hydrolase (115 aa).

The disordered stretch occupies residues 1–23 (MSGLTTHILDQASGKPAAGVGVR). 3 residues coordinate substrate: His-7, Arg-45, and Tyr-112.

Belongs to the transthyretin family. 5-hydroxyisourate hydrolase subfamily. Homotetramer.

The catalysed reaction is 5-hydroxyisourate + H2O = 5-hydroxy-2-oxo-4-ureido-2,5-dihydro-1H-imidazole-5-carboxylate + H(+). In terms of biological role, catalyzes the hydrolysis of 5-hydroxyisourate (HIU) to 2-oxo-4-hydroxy-4-carboxy-5-ureidoimidazoline (OHCU). This chain is 5-hydroxyisourate hydrolase, found in Caulobacter vibrioides (strain ATCC 19089 / CIP 103742 / CB 15) (Caulobacter crescentus).